The sequence spans 578 residues: Probable arginine--tRNA ligase, mitochondrial (578 aa).

The N-terminal 16 residues, 1-16, are a transit peptide targeting the mitochondrion; the sequence is MACGFRRAIACQLSRV. L-arginine is bound by residues 133–135, histidine 144, tyrosine 322, aspartate 326, and glutamine 350; that span reads SPN. The 'HIGH' region motif lies at 133–144; the sequence is SPNVAKKFHVGH. Lysine 568 is modified (N6-acetyllysine).

This sequence belongs to the class-I aminoacyl-tRNA synthetase family.

It is found in the mitochondrion membrane. The enzyme catalyses tRNA(Arg) + L-arginine + ATP = L-arginyl-tRNA(Arg) + AMP + diphosphate. In terms of biological role, catalyzes the attachment of arginine to tRNA(Arg) in a two-step reaction: arginine is first activated by ATP to form Arg-AMP and then transferred to the acceptor end of tRNA(Arg). The polypeptide is Probable arginine--tRNA ligase, mitochondrial (RARS2) (Pongo abelii (Sumatran orangutan)).